The sequence spans 59 residues: Protein QUA-QUINE STARCH (59 aa).

In terms of tissue distribution, expressed in hypocotyls, leaves, vasculature, hydathodes, trichomes, pedicels, sepals, filaments, mature pollen, stigma papillae, styles, siliques, root and shoot tips, but not in shoot meristem, petals or root epidermis.

It localises to the cytoplasm. Its function is as follows. Involved in regulating carbon and nitrogen allocation to starch and protein. This is Protein QUA-QUINE STARCH from Arabidopsis thaliana (Mouse-ear cress).